A 365-amino-acid chain; its full sequence is MTGVAAPERIARAVRADIRALTAYPVADAAGCIKLDAMECPYELPAEVRDDIARAARETPLNRYPAAANPALQAQVRQAFEVPAQAGLLFGNGSDELIHLIIQACCEPGDTVLSPWPSFVYFDMAARLSHARFVGVPLTAGLELDLPATLAAIEAHQPKVVFLALPNNPTGGLWPDAAVRAILDAAPGLVVLDEAYQPFAGHTWMPRIMDEPNAVVMRTVSKIGLAGLRFGYLAGHPAWIAEFDKVRPPYNMDVLSQAVLAAVLRHKPVLDAQADRLRADRQPLADGLAALPGVTVFPSAGNFVLARFCGKLDGNAVHLALKTRKILVRNFSNAHPLLADCLRISVGTPTENAAVLSALQDILSA.

K222 carries the N6-(pyridoxal phosphate)lysine modification.

This sequence belongs to the class-II pyridoxal-phosphate-dependent aminotransferase family. Histidinol-phosphate aminotransferase subfamily. As to quaternary structure, homodimer. It depends on pyridoxal 5'-phosphate as a cofactor.

The catalysed reaction is L-histidinol phosphate + 2-oxoglutarate = 3-(imidazol-4-yl)-2-oxopropyl phosphate + L-glutamate. It participates in amino-acid biosynthesis; L-histidine biosynthesis; L-histidine from 5-phospho-alpha-D-ribose 1-diphosphate: step 7/9. The polypeptide is Histidinol-phosphate aminotransferase 2 (hisC2) (Bordetella bronchiseptica (strain ATCC BAA-588 / NCTC 13252 / RB50) (Alcaligenes bronchisepticus)).